The sequence spans 333 residues: Transcription termination factor MTERF6, chloroplastic/mitochondrial (333 aa).

The protein belongs to the mTERF family.

It localises to the plastid. Its subcellular location is the chloroplast. It is found in the mitochondrion. Its function is as follows. Transcription termination factor essential for chloroplast development. Required for maturation of 16S rRNA, 18S rRNA and 23S rRNA in the chloroplast. Binds to a specific region within the tRNA(Ile)(GAU) gene at a position adjacent to and downstream of the 16S rRNA gene. Required for the maturation of tRNA(Ile)(GAU). Binds to double-stranded DNA. The protein is Transcription termination factor MTERF6, chloroplastic/mitochondrial of Arabidopsis thaliana (Mouse-ear cress).